The chain runs to 228 residues: MSKISSKISSVDQEKFQAFLQQILRNVKTQEDPRVLDAYRRLFRKSVPFSMRSYVAAHLAHTHCRAGATAGSTRRTGAREGIRTGSAHAPSCASAPASAARARDFERKARDYPALCPGDTTSIFISIGKNRHIYPRDIIALLMQRADVAREHIGTIRILDHYSFIQVLSGEAEAVIARLNGLFYRGRTLTVSHSRRADEHPAPSTEPHAAAVAPEPDFMAEPIPALEE.

A disordered region spans residues 194–228 (SRRADEHPAPSTEPHAAAVAPEPDFMAEPIPALEE).

This is an uncharacterized protein from Treponema pallidum (strain Nichols).